Consider the following 295-residue polypeptide: Nitrogenase iron protein 1 (295 aa).

ATP is bound at residue 13–20 (GKGGIGKS). A [4Fe-4S] cluster-binding site is contributed by cysteine 101. ADP-ribosylarginine; by dinitrogenase reductase ADP-ribosyltransferase is present on arginine 104. Cysteine 135 serves as a coordination point for [4Fe-4S] cluster.

The protein belongs to the NifH/BchL/ChlL family. Homodimer. It depends on [4Fe-4S] cluster as a cofactor. The reversible ADP-ribosylation of Arg-104 inactivates the nitrogenase reductase and regulates nitrogenase activity.

The catalysed reaction is N2 + 8 reduced [2Fe-2S]-[ferredoxin] + 16 ATP + 16 H2O = H2 + 8 oxidized [2Fe-2S]-[ferredoxin] + 2 NH4(+) + 16 ADP + 16 phosphate + 6 H(+). Its function is as follows. The key enzymatic reactions in nitrogen fixation are catalyzed by the nitrogenase complex, which has 2 components: the iron protein and the molybdenum-iron protein. The sequence is that of Nitrogenase iron protein 1 (nifH1) from Nostoc sp. (strain PCC 7120 / SAG 25.82 / UTEX 2576).